A 341-amino-acid chain; its full sequence is N-acetyl-gamma-glutamyl-phosphate reductase (341 aa).

The active site involves cysteine 147.

Belongs to the NAGSA dehydrogenase family. Type 1 subfamily.

The protein localises to the cytoplasm. It carries out the reaction N-acetyl-L-glutamate 5-semialdehyde + phosphate + NADP(+) = N-acetyl-L-glutamyl 5-phosphate + NADPH + H(+). It participates in amino-acid biosynthesis; L-arginine biosynthesis; N(2)-acetyl-L-ornithine from L-glutamate: step 3/4. Functionally, catalyzes the NADPH-dependent reduction of N-acetyl-5-glutamyl phosphate to yield N-acetyl-L-glutamate 5-semialdehyde. This chain is N-acetyl-gamma-glutamyl-phosphate reductase, found in Staphylococcus epidermidis (strain ATCC 35984 / DSM 28319 / BCRC 17069 / CCUG 31568 / BM 3577 / RP62A).